A 229-amino-acid chain; its full sequence is Ribonuclease T (229 aa).

The Exonuclease domain occupies 23–197 (VIIDVETAGF…YDTERTAKLF (175 aa)). Residues aspartate 26, glutamate 28, histidine 184, and aspartate 189 each coordinate Mg(2+). Residue histidine 184 is the Proton donor/acceptor of the active site.

It belongs to the RNase T family. In terms of assembly, homodimer. The cofactor is Mg(2+).

In terms of biological role, trims short 3' overhangs of a variety of RNA species, leaving a one or two nucleotide 3' overhang. Responsible for the end-turnover of tRNA: specifically removes the terminal AMP residue from uncharged tRNA (tRNA-C-C-A). Also appears to be involved in tRNA biosynthesis. The protein is Ribonuclease T of Haemophilus influenzae (strain 86-028NP).